The chain runs to 548 residues: Rhotekin (548 aa).

An REM-1 domain is found at 10–85; that stretch reads DLNMLYIRQM…LQRRKEAQVL (76 aa). Phosphoserine occurs at positions 22 and 93. Positions 83–103 are disordered; the sequence is QVLGKTGRRPSDSVQPPERSP. At arginine 217 the chain carries Asymmetric dimethylarginine. Serine 219 carries the post-translational modification Phosphoserine. Residues 296–403 form the PH domain; that stretch reads QPTASGTLRV…WMEALWQLFL (108 aa). Serine 504, serine 513, and serine 528 each carry phosphoserine. The disordered stretch occupies residues 506–548; it reads DAVPADHSLGPSRSVAPLPPQRSPQSRGFYSKSQLSTWLQSPV. The segment covering 528-548 has biased composition (polar residues); the sequence is SPQSRGFYSKSQLSTWLQSPV.

Interacts via its C-terminal region with the TAX1BP3 PDZ domain. This interaction facilitates Rho-mediated activation of the c-Fos serum response element (SRE). Interacts with SEPT9. Specifically binds to GTP-bound RHOA, RHOB and RHOC and inhibits their GTPase activity.

Mediates Rho signaling to activate NF-kappa-B and may confer increased resistance to apoptosis to cells in gastric tumorigenesis. May play a novel role in the organization of septin structures. This is Rhotekin from Rattus norvegicus (Rat).